The primary structure comprises 659 residues: 1,4-alpha-glucan branching enzyme GlgB 2 (659 aa).

The disordered stretch occupies residues 1 to 26; sequence MRNYKELKHEKNGNVTEKIGENKGKS. The Nucleophile role is filled by D337. E390 acts as the Proton donor in catalysis.

This sequence belongs to the glycosyl hydrolase 13 family. GlgB subfamily. Monomer.

It carries out the reaction Transfers a segment of a (1-&gt;4)-alpha-D-glucan chain to a primary hydroxy group in a similar glucan chain.. Its pathway is glycan biosynthesis; glycogen biosynthesis. In terms of biological role, catalyzes the formation of the alpha-1,6-glucosidic linkages in glycogen by scission of a 1,4-alpha-linked oligosaccharide from growing alpha-1,4-glucan chains and the subsequent attachment of the oligosaccharide to the alpha-1,6 position. This is 1,4-alpha-glucan branching enzyme GlgB 2 from Clostridium perfringens (strain SM101 / Type A).